A 139-amino-acid polypeptide reads, in one-letter code: Protein archease (139 aa).

Ca(2+) is bound by residues Asp12, Asp138, and Ile139.

The protein belongs to the archease family.

Activates the tRNA-splicing ligase complex by facilitating the enzymatic turnover of catalytic subunit RtcB. Acts by promoting the guanylylation of RtcB, a key intermediate step in tRNA ligation. Can also alter the NTP specificity of RtcB such that ATP, dGTP or ITP is used efficiently. The sequence is that of Protein archease from Sulfolobus acidocaldarius (strain ATCC 33909 / DSM 639 / JCM 8929 / NBRC 15157 / NCIMB 11770).